A 731-amino-acid polypeptide reads, in one-letter code: ARS-binding factor 1 (731 aa).

K18 participates in a covalent cross-link: Glycyl lysine isopeptide (Lys-Gly) (interchain with G-Cter in ubiquitin). Low complexity-rich tracts occupy residues 84–99 (ASSE…NTNP) and 111–129 (NNMN…NKVS). 4 disordered regions span residues 84 to 132 (ASSE…SNDS), 146 to 227 (ANTH…DDVH), 251 to 308 (VANV…PSSI), and 439 to 463 (YNDL…GTNL). Positions 149-161 (HPDDTNDKVESRS) are enriched in basic and acidic residues. Residues 177–186 (IFKQQGVTIK) are compositionally biased toward polar residues. T189 is subject to Phosphothreonine. S193 is modified (phosphoserine). Low complexity-rich tracts occupy residues 270 to 308 (TNNN…PSSI) and 445 to 454 (SSSSNNNNNN). At S467 the chain carries Phosphoserine. Residues 475–539 (EISSAGTSSN…PSVNKWSKPD (65 aa)) form a disordered region. Over residues 481 to 510 (TSSNTTKNVNNNKNDSNDDNNGNNNNDASN) the composition is skewed to low complexity. A phosphoserine mark is found at S554 and S618. Disordered regions lie at residues 590–643 (RSID…DDKL) and 687–731 (KNTT…LRGQ). At S624 the chain carries Phosphoserine; by PKC. C-terminal sequence stretches follow at residues 624 to 628 (SKRQH) and 639 to 662 (EDDK…KEVE). A compositionally biased stretch (basic and acidic residues) spans 634–643 (LEERNEDDKL). Positions 689 to 698 (TTHHNNHHSQ) are enriched in basic residues. S720 is modified (phosphoserine; by CK2).

It belongs to the BAF1 family. As to quaternary structure, component of the global genome repair (GGR) complex composed of at least ABF1, RAD7 and RAD16. Interacts with PSE1. Extensively phosphorylated on Ser and Thr residues.

Its subcellular location is the nucleus. Its function is as follows. General regulatory factor (GRF) that contributes to transcriptional activation of a large number of genes, as well as to DNA replication, silencing and telomere structure. Involved in the transcription activation of a subset of ribosomal protein genes. Binds the ARS-elements found in many promoters. Binds to the sequence 5'-TCN(7)ACG-3'. Influences on genome-wide nucleosome occupancy and affects chromatin structure, and probably dynamics. As a component of the global genome repair (GGR) complex, promotes global genome nucleotide excision repair (GG-NER) which removes DNA damage from nontranscribing DNA. Component of the regulatory network controlling mitotic and meiotic cell cycle progression. This chain is ARS-binding factor 1 (ABF1), found in Saccharomyces cerevisiae (strain ATCC 204508 / S288c) (Baker's yeast).